The sequence spans 430 residues: tRNA(Ile)-lysidine synthase (430 aa).

Residue 24–29 (SGGLDS) coordinates ATP.

Belongs to the tRNA(Ile)-lysidine synthase family.

It localises to the cytoplasm. The catalysed reaction is cytidine(34) in tRNA(Ile2) + L-lysine + ATP = lysidine(34) in tRNA(Ile2) + AMP + diphosphate + H(+). Functionally, ligates lysine onto the cytidine present at position 34 of the AUA codon-specific tRNA(Ile) that contains the anticodon CAU, in an ATP-dependent manner. Cytidine is converted to lysidine, thus changing the amino acid specificity of the tRNA from methionine to isoleucine. The chain is tRNA(Ile)-lysidine synthase from Haemophilus influenzae (strain PittGG).